Consider the following 181-residue polypeptide: Probable cobalt-precorrin-6B C(15)-methyltransferase (decarboxylating) (181 aa).

S-adenosyl-L-methionine-binding positions include threonine 16, 40-44 (GCGSG), aspartate 61, and alanine 89.

Belongs to the methyltransferase superfamily. Archaeal-type CbiT family.

It carries out the reaction Co-precorrin-6B + S-adenosyl-L-methionine = Co-precorrin-7 + S-adenosyl-L-homocysteine + CO2. It participates in cofactor biosynthesis; adenosylcobalamin biosynthesis; cob(II)yrinate a,c-diamide from sirohydrochlorin (anaerobic route): step 8/10. Functionally, catalyzes the methylation of C-15 in cobalt-precorrin-6B followed by the decarboxylation of C-12 to form cobalt-precorrin-7. This is Probable cobalt-precorrin-6B C(15)-methyltransferase (decarboxylating) from Methanococcus maripaludis (strain DSM 14266 / JCM 13030 / NBRC 101832 / S2 / LL).